The following is an 80-amino-acid chain: Kappa-actitoxin-Avd4f (80 aa).

Positions 1–19 (MNKALFLCLVVLCAAVVFA) are cleaved as a signal peptide. A propeptide spanning residues 20–31 (AEDLQKAKHAPF) is cleaved from the precursor. 3 cysteine pairs are disulfide-bonded: C41–C76, C43–C69, and C59–C77.

Belongs to the sea anemone type 3 (BDS) potassium channel toxin family. In terms of tissue distribution, moderately expressed in the ectodermal tissue from the distal and proximal tentacles, body wall, and oral disk.

Its subcellular location is the secreted. The protein localises to the nematocyst. Functionally, blocks Kv3 voltage-gated potassium channels. Reduces blood pressure. The protein is Kappa-actitoxin-Avd4f of Anemonia viridis (Snakelocks anemone).